Reading from the N-terminus, the 83-residue chain is Cytochrome b559 subunit alpha (83 aa).

The chain crosses the membrane as a helical span at residues 21–35 (IIHSITIPSLFIAGW). Residue H23 coordinates heme.

This sequence belongs to the PsbE/PsbF family. As to quaternary structure, heterodimer of an alpha subunit and a beta subunit. PSII is composed of 1 copy each of membrane proteins PsbA, PsbB, PsbC, PsbD, PsbE, PsbF, PsbH, PsbI, PsbJ, PsbK, PsbL, PsbM, PsbT, PsbX, PsbY, PsbZ, Psb30/Ycf12, at least 3 peripheral proteins of the oxygen-evolving complex and a large number of cofactors. It forms dimeric complexes. Heme b serves as cofactor.

Its subcellular location is the plastid. The protein resides in the chloroplast thylakoid membrane. In terms of biological role, this b-type cytochrome is tightly associated with the reaction center of photosystem II (PSII). PSII is a light-driven water:plastoquinone oxidoreductase that uses light energy to abstract electrons from H(2)O, generating O(2) and a proton gradient subsequently used for ATP formation. It consists of a core antenna complex that captures photons, and an electron transfer chain that converts photonic excitation into a charge separation. The sequence is that of Cytochrome b559 subunit alpha from Lotus japonicus (Lotus corniculatus var. japonicus).